The primary structure comprises 591 residues: MVATSGQTTQGYVVEAYGNLLRVRFDGHVRQGEVAYVNVNDTWLKAEVIEVVGQEVKIQVFEDTQDVCRGALVTFSGHLLEAELGPGLLQGIFDGLQNRLQVLAESSFFLKRGEYVNALCKNTLWEYTPKAVVGDVLVRGDALGFVKEGYFNHKIMVPFSCFKEVTITWVISEGSYSVDTVVAKARDAEGKEYSFTMVQKWPIKQAFIQGDKVPCHEIMDVGIRILDTQIPVLKGGTFCTPGPFGAGKTVLQHHLSKYAAVDIVILCACGERAGEVVEVLQEFPHLTDPHTGESLMHRTCIICNTSSMPVAARESSIYLGITVAEYYRQMGLHVLLLADSTSRWAQALREISGRLEEIPGEEAFPAYLASRIAAFYERGGAVRMKDGSEGSLTICGAVSPAGGNFEEPVTQATLSVVGAFCGLSKARADARRYPSIDPMISWSKYLDQVGDILENKIQGWGKAVKKANYFLREGSEIGKRMEVVGEEGIPMEDMEIYLKAELYDFCYLQQNAFDAVDCYCPFDRQIELFSLMSRIFDAKFSFDCPDNARSFFLELQSKIKTLNGQKFLSEEYKEGMEVVLRLLETKMVQTA.

242-249 (GPFGAGKT) contributes to the ATP binding site.

It belongs to the ATPase alpha/beta chains family.

The enzyme catalyses ATP + H2O + 4 H(+)(in) = ADP + phosphate + 5 H(+)(out). Functionally, produces ATP from ADP in the presence of a proton gradient across the membrane. The V-type alpha chain is a catalytic subunit. The protein is V-type ATP synthase alpha chain of Chlamydia caviae (strain ATCC VR-813 / DSM 19441 / 03DC25 / GPIC) (Chlamydophila caviae).